Consider the following 532-residue polypeptide: Fe-S cluster assembly factor HCF101, chloroplastic (532 aa).

Residues 1-61 (MPLLHPQSLR…RVSQNLSVAK (61 aa)) constitute a chloroplast transit peptide. Ala62 carries the N-acetylalanine modification. 184 to 191 (CKGGVGKS) provides a ligand contact to ATP.

Belongs to the Mrp/NBP35 ATP-binding proteins family. [4Fe-4S] cluster serves as cofactor. In terms of tissue distribution, expressed in aerial tissues exposed to light. Very low expression in roots.

It is found in the plastid. The protein localises to the chloroplast stroma. In terms of biological role, required for photosystem I (PSI) biosynthesis and assembly. May serve as a chloroplast scaffold protein that specifically assembles iron-sulfur (4Fe-4S) clusters and transfers them to the chloroplast PSI and ferredoxin-thioredoxin (FTR) complexes. Can assemble a 4Fe-4S cluster and transfer it to apoproteins in yeast cells. Probably not required for assembly or stability of plastidic 2Fe-2S clusters. This Arabidopsis thaliana (Mouse-ear cress) protein is Fe-S cluster assembly factor HCF101, chloroplastic (HCF101).